The primary structure comprises 175 residues: Cytidylate kinase (175 aa).

7–15 (GLPGSGTTT) contacts ATP.

The protein belongs to the cytidylate kinase family. Type 2 subfamily.

It localises to the cytoplasm. It catalyses the reaction CMP + ATP = CDP + ADP. The enzyme catalyses dCMP + ATP = dCDP + ADP. This Methanococcoides burtonii (strain DSM 6242 / NBRC 107633 / OCM 468 / ACE-M) protein is Cytidylate kinase.